Consider the following 396-residue polypeptide: Elongation factor Tu (396 aa).

In terms of domain architecture, tr-type G spans 10-206 (KPHVNVGTIG…ALDSYIPTPE (197 aa)). Residues 19–26 (GHVDHGKT) are G1. 19–26 (GHVDHGKT) contributes to the GTP binding site. T26 serves as a coordination point for Mg(2+). Residues 60–64 (GITIN) form a G2 region. The interval 81 to 84 (DCPG) is G3. GTP is bound by residues 81–85 (DCPGH) and 136–139 (NKCD). The segment at 136 to 139 (NKCD) is G4. Residues 174–176 (SAK) are G5.

The protein belongs to the TRAFAC class translation factor GTPase superfamily. Classic translation factor GTPase family. EF-Tu/EF-1A subfamily. As to quaternary structure, monomer.

It localises to the cytoplasm. The enzyme catalyses GTP + H2O = GDP + phosphate + H(+). In terms of biological role, GTP hydrolase that promotes the GTP-dependent binding of aminoacyl-tRNA to the A-site of ribosomes during protein biosynthesis. The sequence is that of Elongation factor Tu from Ralstonia nicotianae (strain ATCC BAA-1114 / GMI1000) (Ralstonia solanacearum).